The primary structure comprises 289 residues: Bis(5'-nucleosyl)-tetraphosphatase, symmetrical (289 aa).

The protein belongs to the Ap4A hydrolase family.

The catalysed reaction is P(1),P(4)-bis(5'-adenosyl) tetraphosphate + H2O = 2 ADP + 2 H(+). Its function is as follows. Hydrolyzes diadenosine 5',5'''-P1,P4-tetraphosphate to yield ADP. In Yersinia pseudotuberculosis serotype O:3 (strain YPIII), this protein is Bis(5'-nucleosyl)-tetraphosphatase, symmetrical.